The following is a 182-amino-acid chain: Troponin I, fast skeletal muscle (182 aa).

An N-acetylglycine modification is found at glycine 2. Positions 2 to 48 are involved in binding TNC; it reads GDEEKRNRAITARRQHLKSVMLQIAATELEKEESRREAEKQNYLAEH. Threonine 12 is modified (phosphothreonine). The interval 97 to 117 is involved in binding TNC and actin; sequence NQKLFDLRGKFKRPPLRRVRM. Serine 118 is modified (phosphoserine).

Belongs to the troponin I family. Binds to actin and tropomyosin.

In terms of biological role, troponin I is the inhibitory subunit of troponin, the thin filament regulatory complex which confers calcium-sensitivity to striated muscle actomyosin ATPase activity. This Homo sapiens (Human) protein is Troponin I, fast skeletal muscle (TNNI2).